Here is a 728-residue protein sequence, read N- to C-terminus: FAS1 domain-containing protein fsc1 (728 aa).

Positions 1 to 21 (MNLQFRLYLLFILLFISFANG) are cleaved as a signal peptide. At 22–670 (KNEYEDKSTS…TKRQNRWRIT (649 aa)) the chain is on the vacuolar side. 2 FAS1 domains span residues 29 to 151 (STSI…DNII) and 154 to 285 (PPPA…SSLI). Residue N89 is glycosylated (N-linked (GlcNAc...) asparagine). Residues N404 and N501 are each glycosylated (N-linked (GlcNAc...) asparagine). Residues 671–691 (FISISGLLLSVGICVLCYKIY) form a helical membrane-spanning segment. Residues 692–728 (FKFFRNRFMNQGEREPLLAPADSDTMAGRRNSSSLSV) are Cytoplasmic-facing.

Its subcellular location is the vacuole membrane. Functionally, required for the fusion of autophagosomes with the vacuole. The polypeptide is FAS1 domain-containing protein fsc1 (fsc1) (Schizosaccharomyces pombe (strain 972 / ATCC 24843) (Fission yeast)).